A 1322-amino-acid polypeptide reads, in one-letter code: Structural polyprotein (1322 aa).

Disordered regions lie at residues 18–41 (FAPA…EPQV) and 61–128 (AGLA…RISV). The segment at 48–81 (ALANQMSALQLQVAGLAGQARVDRRGPRRVQKNK) is host transcription inhibition. The segment covering 73 to 86 (GPRRVQKNKQKKKN) has biased composition (basic residues). The short motif at 74–120 (PRRVQKNKQKKKNSSNGEKPKEKKKKQKQQEKKGSGGEKAKKPRNRP) is the Nuclear localization signal element. Basic and acidic residues predominate over residues 101–113 (KQQEKKGSGGEKA). The interval 101–135 (KQQEKKGSGGEKAKKPRNRPGKEVRISVKRARQST) is binding to the viral RNA. The ribosome-binding stretch occupies residues 120 to 134 (PGKEVRISVKRARQS). In terms of domain architecture, Peptidase S3 spans 134-283 (STFPVYHDGA…EIAYSEAIPW (150 aa)). Catalysis depends on His160, which acts as the Charge relay system. The short motif at 165–175 (FDHPELADIKF) is the Nuclear export signal element. Asp182 acts as the Charge relay system in catalysis. Residues 203–213 (MDGVYNGEYGN) are dimerization of the capsid protein. Residue Ser234 is the Charge relay system of the active site. Residues 240 to 244 (DNSGK) are dimerization of the capsid protein. A functions as an uncleaved signal peptide for the precursor of protein E3/E2 region spans residues 284–303 (TRAPALLLLPMVIACTYNSN). 5 disulfides stabilise this stretch: Cys298-Cys307, Cys382-Cys488, Cys385-Cys390, Cys455-Cys469, and Cys517-Cys634. The Extracellular portion of the chain corresponds to 355-735 (AVSTSPVAVY…VHHIKHHPEY (381 aa)). The helical transmembrane segment at 736–756 (AWAFVGVACGLLAVAACMFAC) threads the bilayer. Residues 757 to 792 (ACNRVRYSLLANTFNPNPPPLTALTAALCCIPGARA) are Cytoplasmic-facing. Residues 761 to 785 (VRYSLLANTFNPNPPPLTALTAALC) form a transient transmembrane before p62-6K protein processing region. S-palmitoyl cysteine; by host attachment occurs at residues Cys785 and Cys786. Topologically, residues 793-808 (DQPYLDIIAYLWTNSK) are extracellular. A helical transmembrane segment spans residues 809 to 829 (VAFGLQCAAPVACMLIVTYAL). Topologically, residues 830–834 (RHCRL) are cytoplasmic. A helical membrane pass occupies residues 835–855 (CCNSFLGVRGWSALLVILAYV). Residues 856–1287 (QSCKAYEHTV…YISGPAMRWA (432 aa)) lie on the Extracellular side of the membrane. 8 disulfides stabilise this stretch: Cys910–Cys985, Cys923–Cys965, Cys924–Cys967, Cys929–Cys949, Cys1135–Cys1147, Cys1177–Cys1253, Cys1182–Cys1257, and Cys1204–Cys1247. The E1 fusion peptide loop stretch occupies residues 955–972 (VYPLLWGAAHCFCSTENT). The chain crosses the membrane as a helical span at residues 1288–1309 (GRIVGNPSGPVSSSLAVTYCVV). Residues 1310–1322 (KKCRSKRIRIVKS) lie on the Cytoplasmic side of the membrane. Cys1312 carries S-stearoyl cysteine; by host lipidation.

As to quaternary structure, homodimer. Homomultimer. Interacts with host karyopherin KPNA4; this interaction allows the nuclear import of the viral capsid protein. Interacts with spike glycoprotein E2. Interacts with host IRAK1; the interaction leads to inhibition of IRAK1-dependent signaling. In terms of assembly, the precursor of protein E3/E2 and E1 form a heterodimer shortly after synthesis. Interacts with spike glycoprotein E2. The precursor of protein E3/E2 and E1 form a heterodimer shortly after synthesis. Processing of the precursor of protein E3/E2 into E2 and E3 results in a heterodimer of the spike glycoproteins E2 and E1. Spike at virion surface are constituted of three E2-E1 heterodimers. After target cell attachment and endocytosis, E1 change conformation to form homotrimers. Interacts with 6K protein. As to quaternary structure, interacts with spike glycoprotein E1. Processing of the precursor of protein E3/E2 into E2 and E3 results in a heterodimer of the spike glycoproteins E2 and E1. Spike at virion surface are constituted of a trimer of E2-E1 heterodimers. Interacts with 6K protein. In terms of assembly, oligomer. Interacts with spike glycoprotein E1. Interacts with spike glycoprotein E2. In terms of processing, structural polyprotein: Specific enzymatic cleavages in vivo yield mature proteins. Capsid protein is auto-cleaved during polyprotein translation, unmasking a signal peptide at the N-terminus of the precursor of E3/E2. The remaining polyprotein is then targeted to the host endoplasmic reticulum, where host signal peptidase cleaves it into pE2, 6K and E1 proteins. pE2 is further processed to mature E3 and E2 by host furin in trans-Golgi vesicle. Post-translationally, palmitoylated via thioester bonds. These palmitoylations may induce disruption of the C-terminus transmembrane. This would result in the reorientation of E2 C-terminus from lumenal to cytoplasmic side. N-glycosylated. In terms of processing, palmitoylated via thioester bonds.

Its subcellular location is the virion. It localises to the host cytoplasm. The protein localises to the host cell membrane. The protein resides in the host nucleus. It is found in the virion membrane. Its subcellular location is the host Golgi apparatus. It localises to the host trans-Golgi network. The protein localises to the host endoplasmic reticulum. It catalyses the reaction Autocatalytic release of the core protein from the N-terminus of the togavirus structural polyprotein by hydrolysis of a -Trp-|-Ser- bond.. Functionally, forms an icosahedral capsid with a T=4 symmetry composed of 240 copies of the capsid protein surrounded by a lipid membrane through which penetrate 80 spikes composed of trimers of E1-E2 heterodimers. The capsid protein binds to the viral RNA genome at a site adjacent to a ribosome binding site for viral genome translation following genome release. Possesses a protease activity that results in its autocatalytic cleavage from the nascent structural protein. Following its self-cleavage, the capsid protein transiently associates with ribosomes, and within several minutes the protein binds to viral RNA and rapidly assembles into icosahedric core particles. The resulting nucleocapsid eventually associates with the cytoplasmic domain of the spike glycoprotein E2 at the cell membrane, leading to budding and formation of mature virions. In case of infection, new virions attach to target cells and after clathrin-mediated endocytosis their membrane fuses with the host endosomal membrane. This leads to the release of the nucleocapsid into the cytoplasm, followed by an uncoating event necessary for the genomic RNA to become accessible. The uncoating might be triggered by the interaction of capsid proteins with ribosomes. Binding of ribosomes would release the genomic RNA since the same region is genomic RNA-binding and ribosome-binding. Specifically inhibits interleukin-1 receptor-associated kinase 1/IRAK1-dependent signaling during viral entry, representing a means by which the alphaviruses may evade innate immune detection and activation prior to viral gene expression. In terms of biological role, provides the signal sequence for the translocation of the precursor of protein E3/E2 to the host endoplasmic reticulum. Furin-cleaved E3 remains associated with spike glycoprotein E1 and mediates pH protection of the latter during the transport via the secretory pathway. After virion release from the host cell, the assembly protein E3 is gradually released in the extracellular space. Plays a role in viral attachment to target host cell, by binding to the cell receptor. Synthesized as a p62 precursor which is processed by furin at the cell membrane just before virion budding, giving rise to E2-E1 heterodimer. The p62-E1 heterodimer is stable, whereas E2-E1 is unstable and dissociate at low pH. p62 is processed at the last step, presumably to avoid E1 fusion activation before its final export to cell surface. E2 C-terminus contains a transitory transmembrane that would be disrupted by palmitoylation, resulting in reorientation of the C-terminal tail from lumenal to cytoplasmic side. This step is critical since E2 C-terminus is involved in budding by interacting with capsid proteins. This release of E2 C-terminus in cytoplasm occurs lately in protein export, and precludes premature assembly of particles at the endoplasmic reticulum membrane. Its function is as follows. Acts as a viroporin that participates in virus glycoprotein processing and transport to the plasma membrane, cell permeabilization and budding of viral particles. Disrupts the calcium homeostasis of the cell, probably at the endoplasmic reticulum level. This leads to cytoplasmic calcium elevation. Because of its lipophilic properties, the 6K protein is postulated to influence the selection of lipids that interact with the transmembrane domains of the glycoproteins, which, in turn, affects the deformability of the bilayer required for the extreme curvature that occurs as budding proceeds. Present in low amount in virions, about 3% compared to viral glycoproteins. Functionally, class II viral fusion protein. Fusion activity is inactive as long as E1 is bound to E2 in mature virion. After virus attachment to target cell and endocytosis, acidification of the endosome induce dissociation of E1/E2 heterodimer and concomitant trimerization of the E1 subunits. This E1 trimer is fusion active, and promotes release of viral nucleocapsid in cytoplasm after endosome and viral membrane fusion. Efficient fusion requires the presence of cholesterol and sphingolipid in the target membrane. The sequence is that of Structural polyprotein from Oncorhynchus mykiss (Rainbow trout).